The primary structure comprises 272 residues: Phosphatidylglycerol--prolipoprotein diacylglyceryl transferase (272 aa).

A run of 7 helical transmembrane segments spans residues 17–37 (LQVHWYGLMYLLAFLCAWGLA), 55–75 (LVFYGALGVVLGGRIGYVLFY), 90–110 (VWTGGMSFHGGFLGVMIAMLF), 125–145 (FIAPCVPTGLMFGRIGNFIGG), 174–194 (PSQIYQALCEGLLLFIILWWF), 202–222 (MAVSALFLMGYGVARFVMEFF), and 230–250 (GFILFGWMTKGQILTVPMLLI). R138 lines the a 1,2-diacyl-sn-glycero-3-phospho-(1'-sn-glycerol) pocket.

It belongs to the Lgt family.

The protein localises to the cell inner membrane. It catalyses the reaction L-cysteinyl-[prolipoprotein] + a 1,2-diacyl-sn-glycero-3-phospho-(1'-sn-glycerol) = an S-1,2-diacyl-sn-glyceryl-L-cysteinyl-[prolipoprotein] + sn-glycerol 1-phosphate + H(+). The protein operates within protein modification; lipoprotein biosynthesis (diacylglyceryl transfer). In terms of biological role, catalyzes the transfer of the diacylglyceryl group from phosphatidylglycerol to the sulfhydryl group of the N-terminal cysteine of a prolipoprotein, the first step in the formation of mature lipoproteins. In Acinetobacter baumannii (strain ACICU), this protein is Phosphatidylglycerol--prolipoprotein diacylglyceryl transferase.